Reading from the N-terminus, the 103-residue chain is Large ribosomal subunit protein bL21 (103 aa).

The protein belongs to the bacterial ribosomal protein bL21 family. In terms of assembly, part of the 50S ribosomal subunit. Contacts protein L20.

Its function is as follows. This protein binds to 23S rRNA in the presence of protein L20. The chain is Large ribosomal subunit protein bL21 from Enterobacter sp. (strain 638).